A 435-amino-acid chain; its full sequence is Zinc finger CCCH domain-containing protein 67 (435 aa).

A disordered region spans residues 1 to 91 (MSKPEETSDP…DQKEEEEGSE (91 aa)). C3H1-type zinc fingers lie at residues 101 to 129 (RPDS…HPVR), 148 to 176 (NPKL…HMKE), and 194 to 222 (RPGE…HPDP). The segment at 235-274 (GNNGGSFSPKAPSQASSTSWSSTRHMNGTGTAPFIPSMFP) is disordered. Low complexity predominate over residues 247-256 (SQASSTSWSS). 2 C3H1-type zinc fingers span residues 334 to 362 (RPDQ…HPKN) and 380 to 408 (RPDQ…HSIP). Residues 412–435 (SPSSSQTVEARQVGANGNEDDSWH) form a disordered region.

It localises to the nucleus. In Arabidopsis thaliana (Mouse-ear cress), this protein is Zinc finger CCCH domain-containing protein 67.